The following is a 327-amino-acid chain: Serpentine receptor class alpha-12 (327 aa).

The Extracellular portion of the chain corresponds to 1-18 (MGCASEIQAEIFTSFGQL). Residues 19-39 (FYASFQTILFLATIIGSLLAI) traverse the membrane as a helical segment. Over 40-53 (FELCKKTTVPDSTR) the chain is Cytoplasmic. Residues 54–74 (VLLIGSLFFANAHEFAYFTAP) traverse the membrane as a helical segment. The Extracellular segment spans residues 75 to 98 (LKVFQLNIFNTNTSCYPLISTRDC). The chain crosses the membrane as a helical span at residues 99-119 (IPTTTVLAMGISGNMLIQSAL). Over 120–138 (SIDRLLATIFPFSYSRMRA) the chain is Cytoplasmic. A helical transmembrane segment spans residues 139-159 (LPGFVLLIMVLIPAMFTYSWI). The Extracellular portion of the chain corresponds to 160–185 (RLDIVLDDYQMFCSQWSANISTRANT). A helical membrane pass occupies residues 186–206 (FLEICSYLTVAHIIINCLIIL). At 207–234 (RNRAIEKRCRFDVTQRYLTSENLKTTQA) the chain is on the cytoplasmic side. A helical membrane pass occupies residues 235 to 255 (ICYLSIAQFLAMFMYSGGVLL). Topologically, residues 256–270 (MRKNRENIPTLIYFN) are extracellular. A helical transmembrane segment spans residues 271–291 (VIVWVYAPPYACVSLAPLILF). Topologically, residues 292-327 (SLWNLKKQRHIQIKSVQSAQKETQDDYIRKLQKSWK) are cytoplasmic.

Belongs to the nematode receptor-like protein sra family. In terms of tissue distribution, expressed in neurons RIF/RIG and PVT.

It localises to the membrane. The polypeptide is Serpentine receptor class alpha-12 (sra-12) (Caenorhabditis elegans).